The chain runs to 2260 residues: Protein Ycf2 (2260 aa).

G1614–S1621 lines the ATP pocket.

It belongs to the Ycf2 family.

The protein localises to the plastid. It is found in the chloroplast stroma. In terms of biological role, probable ATPase of unknown function. Its presence in a non-photosynthetic plant (Epifagus virginiana) and experiments in tobacco indicate that it has an essential function which is probably not related to photosynthesis. This Dioscorea elephantipes (Elephant's foot yam) protein is Protein Ycf2.